The chain runs to 400 residues: Nicotinate phosphoribosyltransferase (400 aa).

H220 is subject to Phosphohistidine; by autocatalysis.

This sequence belongs to the NAPRTase family. Transiently phosphorylated on a His residue during the reaction cycle. Phosphorylation strongly increases the affinity for substrates and increases the rate of nicotinate D-ribonucleotide production. Dephosphorylation regenerates the low-affinity form of the enzyme, leading to product release.

It catalyses the reaction nicotinate + 5-phospho-alpha-D-ribose 1-diphosphate + ATP + H2O = nicotinate beta-D-ribonucleotide + ADP + phosphate + diphosphate. It functions in the pathway cofactor biosynthesis; NAD(+) biosynthesis; nicotinate D-ribonucleotide from nicotinate: step 1/1. In terms of biological role, catalyzes the synthesis of beta-nicotinate D-ribonucleotide from nicotinate and 5-phospho-D-ribose 1-phosphate at the expense of ATP. The chain is Nicotinate phosphoribosyltransferase from Salmonella newport (strain SL254).